The sequence spans 522 residues: L-tyrosine/L-DOPA decarboxylase 2 (522 aa).

2 consecutive repeat copies span residues 75–132 and 135–186. Positions 75–186 are 2 X approximate tandem repeats; it reads KDVHDDIVPG…RILDRIGREH (112 aa). Pyridoxal 5'-phosphate-binding residues include Thr-163, Cys-164, Thr-258, and Asn-312. Lys-315 bears the N6-(pyridoxal phosphate)lysine mark.

The protein belongs to the group II decarboxylase family. It depends on pyridoxal 5'-phosphate as a cofactor. In terms of tissue distribution, strongly expressed in all tissues, particularly in thick roots.

The enzyme catalyses L-tyrosine + H(+) = tyramine + CO2. The catalysed reaction is L-dopa + H(+) = dopamine + CO2. It participates in aromatic compound metabolism. The protein operates within alkaloid biosynthesis. Aromatic amino acid decarboxylase participating in the biosynthesis of natural products derived from phenylethylamine, including mescaline, a natural hallucinogen potentially used in psychotherapeutic treatments. Catalyzes the decarboxylation of L-tyrosine and L-DOPA. This is L-tyrosine/L-DOPA decarboxylase 2 from Lophophora williamsii (Peyote).